The following is a 967-amino-acid chain: Alanine--tRNA ligase, cytoplasmic (967 aa).

Residues His605, His609, Cys724, and His728 each contribute to the Zn(2+) site.

Belongs to the class-II aminoacyl-tRNA synthetase family. Monomer. The cofactor is Zn(2+). In terms of processing, the N-terminus is blocked.

The protein localises to the cytoplasm. The enzyme catalyses tRNA(Ala) + L-alanine + ATP = L-alanyl-tRNA(Ala) + AMP + diphosphate. In terms of biological role, catalyzes the attachment of alanine to tRNA(Ala) in a two-step reaction: alanine is first activated by ATP to form Ala-AMP and then transferred to the acceptor end of tRNA(Ala). Also edits incorrectly charged tRNA(Ala) via its editing domain. The protein is Alanine--tRNA ligase, cytoplasmic of Bombyx mori (Silk moth).